A 741-amino-acid polypeptide reads, in one-letter code: Type VI secretion system spike protein VgrG1b (741 aa).

2 stretches are compositionally biased toward polar residues: residues 614–629 and 649–663; these read SIGANRSESVGNNETI and GNQSTSIGKNESRSV. The interval 614–678 is disordered; that stretch reads SIGANRSESV…TSVGKDDSLD (65 aa).

Belongs to the VgrG protein family.

It is found in the secreted. Functionally, part of the H1 type VI secretion system (H1-T6SS) specialized secretion system, which delivers several virulence factors in both prokaryotic and eukaryotic cells during infection. Allows the delivery of the Tse7 toxin to target cells where it exerts toxicity through its nuclease domain. The chain is Type VI secretion system spike protein VgrG1b from Pseudomonas aeruginosa (strain ATCC 15692 / DSM 22644 / CIP 104116 / JCM 14847 / LMG 12228 / 1C / PRS 101 / PAO1).